Consider the following 214-residue polypeptide: Putative pit accessory protein (214 aa).

It belongs to the UPF0111 family.

In terms of biological role, could be involved in orthophosphate transport. The polypeptide is Putative pit accessory protein (Rhizobium meliloti (strain 1021) (Ensifer meliloti)).